The primary structure comprises 652 residues: Regulator of DNA class I crossover intermediates 1 (652 aa).

Positions 1–231 (MNWVGGSRSR…TLFERLNSLG (231 aa)) form a DNA-binding region, binds DNA containing a D-loop. Disordered stretches follow at residues 363–434 (NKTS…NIPS) and 469–506 (KISL…EDQI). A compositionally biased stretch (basic and acidic residues) spans 377–388 (YQREYNKNERND). The span at 389 to 401 (LSTSFENDYYPSS) shows a compositional bias: polar residues. Residues 402–417 (SERKEKFENDYQEKTP) are compositionally biased toward basic and acidic residues. Low complexity predominate over residues 473 to 498 (DSAQSSRSTSYSPRPTDSCFSSSSDL).

In terms of assembly, interacts with MSH5. Interacts with TEX11.

It localises to the chromosome. In terms of biological role, involved in recombination, probably acting by stabilizing recombination intermediates during meiotic crossover formation. Required for normal germline development and fertility. Required for meiotic progression, complete chromosomal synapsis and crossover formation. Binds double-stranded DNA. However, also binds branched DNA molecules, such as those containing a D-loop or Holliday junction structure. Probably not required for formation of DNA double-strand breaks (DSBs). Also binds RNA in an RNA structure-independent manner, with a preference for binding 3'-UTR regions of mRNAs; may stabilize bound RNAs. The protein is Regulator of DNA class I crossover intermediates 1 of Homo sapiens (Human).